We begin with the raw amino-acid sequence, 346 residues long: tRNA-specific 2-thiouridylase MnmA (346 aa).

6–13 is an ATP binding site; it reads AMSGGTDS. C90 (nucleophile) is an active-site residue. A disulfide bridge connects residues C90 and C187. G114 provides a ligand contact to ATP. The tract at residues 137 to 139 is interaction with tRNA; the sequence is KDQ. The active-site Cysteine persulfide intermediate is the C187. The segment at 292–293 is interaction with tRNA; sequence RY.

The protein belongs to the MnmA/TRMU family.

The protein localises to the cytoplasm. The catalysed reaction is S-sulfanyl-L-cysteinyl-[protein] + uridine(34) in tRNA + AH2 + ATP = 2-thiouridine(34) in tRNA + L-cysteinyl-[protein] + A + AMP + diphosphate + H(+). In terms of biological role, catalyzes the 2-thiolation of uridine at the wobble position (U34) of tRNA, leading to the formation of s(2)U34. The protein is tRNA-specific 2-thiouridylase MnmA of Nitratidesulfovibrio vulgaris (strain ATCC 29579 / DSM 644 / CCUG 34227 / NCIMB 8303 / VKM B-1760 / Hildenborough) (Desulfovibrio vulgaris).